The following is a 39-amino-acid chain: Photosystem II reaction center protein J (39 aa).

Residues 9–29 traverse the membrane as a helical segment; it reads LWLVGLVGGLAVITMLGLFIY.

Belongs to the PsbJ family. In terms of assembly, PSII is composed of 1 copy each of membrane proteins PsbA, PsbB, PsbC, PsbD, PsbE, PsbF, PsbH, PsbI, PsbJ, PsbK, PsbL, PsbM, PsbT, PsbX, PsbY, PsbZ, Psb30/Ycf12, at least 3 peripheral proteins of the oxygen-evolving complex and a large number of cofactors. It forms dimeric complexes.

It localises to the plastid. The protein localises to the chloroplast thylakoid membrane. Its function is as follows. One of the components of the core complex of photosystem II (PSII). PSII is a light-driven water:plastoquinone oxidoreductase that uses light energy to abstract electrons from H(2)O, generating O(2) and a proton gradient subsequently used for ATP formation. It consists of a core antenna complex that captures photons, and an electron transfer chain that converts photonic excitation into a charge separation. The chain is Photosystem II reaction center protein J from Phaeodactylum tricornutum (strain CCAP 1055/1).